A 296-amino-acid polypeptide reads, in one-letter code: (3R)-3-[(carboxymethyl)amino]fatty acid oxygenase/decarboxylase (296 aa).

Positions 66, 71, and 98 each coordinate (3R)-3-[(carboxymethyl)amino]butanoate. Tyr66, Tyr71, and Gly98 together coordinate (3R)-3-{[carboxy(hydroxy)methyl]amino}butanoate. Positions 102 and 104 each coordinate Fe(2+). (3R)-3-[(carboxymethyl)amino]butanoate is bound by residues Tyr105 and Lys163. Tyr105 and Lys163 together coordinate (3R)-3-{[carboxy(hydroxy)methyl]amino}butanoate. Residue His265 participates in Fe(2+) binding. A 2-oxoglutarate-binding site is contributed by His269. Arg280 provides a ligand contact to (3R)-3-[(carboxymethyl)amino]butanoate. Arg280 provides a ligand contact to (3R)-3-{[carboxy(hydroxy)methyl]amino}butanoate.

This sequence belongs to the TfdA dioxygenase family. Fe(2+) is required as a cofactor.

It carries out the reaction a (3R)-3-[(carboxymethyl)amino]fatty acid + 2 2-oxoglutarate + 2 O2 = a (3R)-3-isocyanyl-fatty acid + 2 succinate + 3 CO2 + 2 H2O. The enzyme catalyses a (3R)-3-[(carboxymethyl)amino]fatty acid + 2-oxoglutarate + O2 = a (3R)-3-{[carboxy(hydroxy)methyl]amino}fatty acid + succinate + CO2. The catalysed reaction is a (3R)-3-{[carboxy(hydroxy)methyl]amino}fatty acid + 2-oxoglutarate + O2 = a (3R)-3-isocyanyl-fatty acid + succinate + 2 CO2 + 2 H2O. It catalyses the reaction (3R)-3-[(carboxymethyl)amino]butanoate + 2 2-oxoglutarate + 2 O2 = (3R)-3-isocyanylbutanoate + 2 succinate + 3 CO2 + 2 H2O. It carries out the reaction (3R)-3-[(carboxymethyl)amino]butanoate + 2-oxoglutarate + O2 = (3R)-3-{[carboxy(hydroxy)methyl]amino}butanoate + succinate + CO2. The enzyme catalyses (3R)-3-{[carboxy(hydroxy)methyl]amino}butanoate + 2-oxoglutarate + O2 = (3R)-3-isocyanylbutanoate + succinate + 2 CO2 + 2 H2O. Its function is as follows. Involved in the biosynthesis of a unique class of isonitrile lipopeptides (INLPs). Catalyzes the conversion of (3R)-3-[(carboxymethyl)amino]fatty acids such as (3R)-3-[(carboxymethyl)amino]butanoate (CABA) to (3R)-3-isocyanylbutanoate (INBA) through an oxidative decarboxylation mechanism, thereby generating the isonitrile group of INLPs. In Streptomyces coeruleorubidus, this protein is (3R)-3-[(carboxymethyl)amino]fatty acid oxygenase/decarboxylase.